Here is a 227-residue protein sequence, read N- to C-terminus: 2,3-bisphosphoglycerate-dependent phosphoglycerate mutase (227 aa).

Residues 7–14 (RHGFSEWN), 20–21 (TG), arginine 59, 86–89 (ERHY), lysine 97, 113–114 (RR), and 182–183 (GN) contribute to the substrate site. The active-site Tele-phosphohistidine intermediate is the histidine 8. Glutamate 86 acts as the Proton donor/acceptor in catalysis.

The protein belongs to the phosphoglycerate mutase family. BPG-dependent PGAM subfamily. As to quaternary structure, homodimer.

The enzyme catalyses (2R)-2-phosphoglycerate = (2R)-3-phosphoglycerate. Its pathway is carbohydrate degradation; glycolysis; pyruvate from D-glyceraldehyde 3-phosphate: step 3/5. Its function is as follows. Catalyzes the interconversion of 2-phosphoglycerate and 3-phosphoglycerate. In Glaesserella parasuis serovar 5 (strain SH0165) (Haemophilus parasuis), this protein is 2,3-bisphosphoglycerate-dependent phosphoglycerate mutase.